A 440-amino-acid polypeptide reads, in one-letter code: Exodeoxyribonuclease 7 large subunit (440 aa).

The protein belongs to the XseA family. Heterooligomer composed of large and small subunits.

It localises to the cytoplasm. It catalyses the reaction Exonucleolytic cleavage in either 5'- to 3'- or 3'- to 5'-direction to yield nucleoside 5'-phosphates.. In terms of biological role, bidirectionally degrades single-stranded DNA into large acid-insoluble oligonucleotides, which are then degraded further into small acid-soluble oligonucleotides. The protein is Exodeoxyribonuclease 7 large subunit of Ralstonia nicotianae (strain ATCC BAA-1114 / GMI1000) (Ralstonia solanacearum).